The primary structure comprises 475 residues: Aspartyl/glutamyl-tRNA(Asn/Gln) amidotransferase subunit B (475 aa).

Belongs to the GatB/GatE family. GatB subfamily. In terms of assembly, heterotrimer of A, B and C subunits.

It catalyses the reaction L-glutamyl-tRNA(Gln) + L-glutamine + ATP + H2O = L-glutaminyl-tRNA(Gln) + L-glutamate + ADP + phosphate + H(+). The enzyme catalyses L-aspartyl-tRNA(Asn) + L-glutamine + ATP + H2O = L-asparaginyl-tRNA(Asn) + L-glutamate + ADP + phosphate + 2 H(+). Its function is as follows. Allows the formation of correctly charged Asn-tRNA(Asn) or Gln-tRNA(Gln) through the transamidation of misacylated Asp-tRNA(Asn) or Glu-tRNA(Gln) in organisms which lack either or both of asparaginyl-tRNA or glutaminyl-tRNA synthetases. The reaction takes place in the presence of glutamine and ATP through an activated phospho-Asp-tRNA(Asn) or phospho-Glu-tRNA(Gln). This chain is Aspartyl/glutamyl-tRNA(Asn/Gln) amidotransferase subunit B, found in Thermoanaerobacter pseudethanolicus (strain ATCC 33223 / 39E) (Clostridium thermohydrosulfuricum).